The primary structure comprises 563 residues: MGLQACLLGLFALILSGKCSYSPEPDQRRTLPPGWVSLGRADPEEELSLTFALRQQNLERLSELVQAVSDPNSPQYGKYLTLENVADLVRPSPLTLHMVQKWLLAAGAQKCHSVITQDFLTCWLSIRQAELLLPGAEFHHYVGGPTETHVVRSPRPYQLPQALAPHVDFVGGLHRFPPTSSLRQRPEPQVTGTVGLHLGVTPSVIRKRYNLTSQDVGSGTSNNSQACAQFLEQYFHDSDLAQFMRLFGGNFAHQASVTRVVGQQGRGRAGIEASLDVQYLMSAGANISTWVYSSPGRHEGQEPFLQWLMLLSNESALPHVHTVSYGDEEDSLSSAYIQRVNTELMKAAARGLTLLFASGDSGAGCWSVSGRHQFRPTFPASSPYVTTVGGTSFQEPFLITNEIVDYISGGGFSNVFPRPSYQEEAVAKFLSSSPHLPPSGYFNASGRAYPDVAALSDGYWVVSNRVPIPWVSGTSASTPVFGGLLSLINEHRILSGRPPLGFLNPRLYQQHGAGLFDVTHGCHASCLDEEVEGQGFCSGPGWDPVTGWGTPNFPALLKTLLNP.

The first 19 residues, 1–19, serve as a signal peptide directing secretion; the sequence is MGLQACLLGLFALILSGKC. The propeptide at 20–195 is removed in mature form; it reads SYSPEPDQRR…PEPQVTGTVG (176 aa). A disulfide bridge links cysteine 111 with cysteine 122. Positions 199-563 constitute a Peptidase S53 domain; the sequence is GVTPSVIRKR…PALLKTLLNP (365 aa). Asparagine 210 and asparagine 222 each carry an N-linked (GlcNAc...) asparagine glycan. Active-site charge relay system residues include glutamate 272 and aspartate 276. N-linked (GlcNAc...) asparagine glycosylation is found at asparagine 286, asparagine 313, and asparagine 443. 2 disulfides stabilise this stretch: cysteine 365–cysteine 526 and cysteine 522–cysteine 537. Serine 475 acts as the Charge relay system in catalysis. The Ca(2+) site is built by aspartate 517 and valine 518. Ca(2+) is bound by residues glycine 539, glycine 541, and aspartate 543.

Monomer. Interacts with CLN5. Interacts with CLN3. It depends on Ca(2+) as a cofactor. In terms of processing, activated by autocatalytic proteolytical processing upon acidification. N-glycosylation is required for processing and activity.

The protein localises to the lysosome. It is found in the melanosome. The catalysed reaction is Release of an N-terminal tripeptide from a polypeptide, but also has endopeptidase activity.. Functionally, lysosomal serine protease with tripeptidyl-peptidase I activity. May act as a non-specific lysosomal peptidase which generates tripeptides from the breakdown products produced by lysosomal proteinases. Requires substrates with an unsubstituted N-terminus. This is Tripeptidyl-peptidase 1 (TPP1) from Macaca fascicularis (Crab-eating macaque).